The chain runs to 101 residues: Thylakoid-associated protein slr0729 (101 aa).

Its subcellular location is the cellular thylakoid membrane. The chain is Thylakoid-associated protein slr0729 from Synechocystis sp. (strain ATCC 27184 / PCC 6803 / Kazusa).